Reading from the N-terminus, the 113-residue chain is Endoribonuclease SymE (113 aa).

The region spanning 29 to 74 (GRYPDYSRIPAITLKGQWLEVAGFATGTAVDVKVMEGCIVLTAQPP) is the SpoVT-AbrB domain.

Belongs to the SymE family.

Its subcellular location is the cytoplasm. Its function is as follows. Involved in the degradation and recycling of damaged RNA. It is itself a target for degradation by the ATP-dependent protease Lon. The protein is Endoribonuclease SymE of Escherichia coli O7:K1 (strain IAI39 / ExPEC).